Here is a 147-residue protein sequence, read N- to C-terminus: UPF0216 protein MK1676 (147 aa).

The protein belongs to the UPF0216 family.

The protein is UPF0216 protein MK1676 of Methanopyrus kandleri (strain AV19 / DSM 6324 / JCM 9639 / NBRC 100938).